Consider the following 640-residue polypeptide: Threonine--tRNA ligase (640 aa).

The TGS domain maps to 1–61 (MPIITLPDGS…DRDATLQIIT (61 aa)). The tract at residues 242–533 (DHRRIGKQLD…LIEHYAGAFP (292 aa)) is catalytic. The Zn(2+) site is built by Cys333, His384, and His510.

Belongs to the class-II aminoacyl-tRNA synthetase family. In terms of assembly, homodimer. It depends on Zn(2+) as a cofactor.

The protein resides in the cytoplasm. The enzyme catalyses tRNA(Thr) + L-threonine + ATP = L-threonyl-tRNA(Thr) + AMP + diphosphate + H(+). Catalyzes the attachment of threonine to tRNA(Thr) in a two-step reaction: L-threonine is first activated by ATP to form Thr-AMP and then transferred to the acceptor end of tRNA(Thr). Also edits incorrectly charged L-seryl-tRNA(Thr). The sequence is that of Threonine--tRNA ligase from Pseudomonas aeruginosa (strain LESB58).